The chain runs to 726 residues: tRNA endonuclease ANKZF1 (726 aa).

The tract at residues 40 to 61 (LARAPRTSCSGSGERESPERKL) is disordered. A compositionally biased stretch (basic and acidic residues) spans 52–61 (GERESPERKL). The C2H2-type zinc-finger motif lies at 72-96 (LFCSTCDQTFQNHQEQREHYKLDWH). Residues 120 to 130 (STGDLSSISGS) are compositionally biased toward low complexity. The interval 120 to 141 (STGDLSSISGSEDSDSASEEDL) is disordered. Over residues 131–141 (EDSDSASEEDL) the composition is skewed to acidic residues. The VLRF1 domain occupies 203–346 (GPRDCVVLMA…QRVLHKLTTL (144 aa)). Gln-246 is an active-site residue. Residues Ser-258, Ser-361, and Ser-398 each carry the phosphoserine modification. Disordered regions lie at residues 387 to 409 (DEKEALGQNEESPKQGSGSEGED) and 436 to 474 (RRRRKRNKKEKSRDQEAGAHRTLLQQTQEEEPSTQSSQA). Positions 436–445 (RRRRKRNKKE) are enriched in basic residues. The segment covering 457–473 (TLLQQTQEEEPSTQSSQ) has biased composition (low complexity). The stretch at 493–526 (ELWNALLAACRAGDVGVLKLQLAPSPADPRVLSL) is one ANK 1 repeat. Ser-533 is subject to Phosphoserine. Residues 534 to 563 (GGFTLLHAAAAAGRGSVVRLLLEAGADPTV) form an ANK 2 repeat. The segment at 588-656 (MEKNPDAYDY…RRFAALSDRE (69 aa)) is disordered. Phosphothreonine is present on Thr-607. Positions 609-659 (EMEARQATRKREQKAARRQREEQQQRQQEQEEREREEQRRFAALSDREKRA) form a coiled coil. Over residues 610 to 656 (MEARQATRKREQKAARRQREEQQQRQQEQEEREREEQRRFAALSDRE) the composition is skewed to basic and acidic residues. The tract at residues 654–666 (DREKRALAAERRL) is VCP/p97-interacting motif (VIM). Residues Ser-675 and Ser-680 each carry the phosphoserine modification.

It belongs to the ANKZF1/VMS1 family. As to quaternary structure, interacts (via VIM motif) with VCP.

It is found in the cytoplasm. In terms of biological role, endonuclease that cleaves polypeptidyl-tRNAs downstream of the ribosome-associated quality control (RQC) pathway to release incompletely synthesized polypeptides for degradation. The RQC pathway disassembles aberrantly stalled translation complexes to recycle or degrade the constituent parts. ANKZF1 acts downstream disassembly of stalled ribosomes and specifically cleaves off the terminal 3'-CCA nucleotides universal to all tRNAs from polypeptidyl-tRNAs, releasing (1) ubiquitinated polypeptides from 60S ribosomal subunit for degradation and (2) cleaved tRNAs. ANKZF1-cleaved tRNAs are then repaired and recycled by ELAC1 and TRNT1. Also plays a role in the cellular response to hydrogen peroxide and in the maintenance of mitochondrial integrity under conditions of cellular stress. The chain is tRNA endonuclease ANKZF1 from Homo sapiens (Human).